An 86-amino-acid polypeptide reads, in one-letter code: Acyl carrier protein (86 aa).

Positions aspartate 10–glutamine 85 constitute a Carrier domain. Residue serine 45 is modified to O-(pantetheine 4'-phosphoryl)serine.

It belongs to the acyl carrier protein (ACP) family. In terms of processing, 4'-phosphopantetheine is transferred from CoA to a specific serine of apo-ACP by AcpS. This modification is essential for activity because fatty acids are bound in thioester linkage to the sulfhydryl of the prosthetic group.

Its subcellular location is the cytoplasm. Its pathway is lipid metabolism; fatty acid biosynthesis. Carrier of the growing fatty acid chain in fatty acid biosynthesis. The chain is Acyl carrier protein from Rickettsia prowazekii (strain Madrid E).